The sequence spans 176 residues: Inorganic pyrophosphatase (176 aa).

Residues lysine 31, arginine 45, and tyrosine 57 each coordinate substrate. Positions 67, 72, and 104 each coordinate Mg(2+). Tyrosine 142 provides a ligand contact to substrate.

Belongs to the PPase family. In terms of assembly, homohexamer. Requires Mg(2+) as cofactor.

The protein localises to the cytoplasm. The enzyme catalyses diphosphate + H2O = 2 phosphate + H(+). Catalyzes the hydrolysis of inorganic pyrophosphate (PPi) forming two phosphate ions. This is Inorganic pyrophosphatase from Haemophilus influenzae (strain ATCC 51907 / DSM 11121 / KW20 / Rd).